Reading from the N-terminus, the 328-residue chain is Galactinol synthase 10 (328 aa).

Lysine 106 is an active-site residue. Mn(2+) is bound by residues aspartate 122, aspartate 124, and histidine 248.

The protein belongs to the glycosyltransferase 8 family. Galactosyltransferase subfamily. The cofactor is a divalent metal cation.

Its subcellular location is the cytoplasm. It carries out the reaction myo-inositol + UDP-alpha-D-galactose = alpha-D-galactosyl-(1-&gt;3)-1D-myo-inositol + UDP + H(+). Galactinol synthase involved in the biosynthesis of raffinose family oligosaccharides (RFOs) that function as osmoprotectants. May promote plant stress tolerance. The sequence is that of Galactinol synthase 10 (GOLS10) from Arabidopsis thaliana (Mouse-ear cress).